A 74-amino-acid chain; its full sequence is Cecropin-P4 (74 aa).

Residues methionine 1 to serine 13 form the signal peptide. A propeptide spans histidine 45–leucine 74 (removed in mature form). Positions histidine 51 to leucine 74 are disordered.

This sequence belongs to the cecropin family. Expressed in the body wall, intestine, uterus and ovary.

Its subcellular location is the secreted. Has antibacterial activity against several Gram-positive and Gram-negative bacteria. Is weakly active against yeasts. Acts by a nonpore mechanism. This is Cecropin-P4 (ASCEC-4) from Ascaris suum (Pig roundworm).